Here is a 658-residue protein sequence, read N- to C-terminus: MVNSKGKITDSDPGSSHLLLNGLADKAGKNQDTEPENSLCSQYEEKVRPCIDLIDSLRALGVEQDLALPAIAVIGDQSSGKSSVLEALSGVALPRGSGIVTRCPLVLKLKKLLNKDEWRGKVSYQDFEMEISDPSEVEVEINKAQNAIAGEGQGISHELISLEVSSPHVPDLTLIDLPGITRVAVGNQPADIGHQTKKLIKKYILKQETINLVVVPCNVDIATTEALSMAEEVDPDGDRTIGILTKPDLVDRGTESKVVDVAQNLVCHLKKGYMIVKCRGQQDIQDQVTLTEALQKERDFFEDHPHFRVLLEEGRATVPCLADRLTSELITHICKTLPLLENQIKENYEKITEELQKYGSDVPEEEHEKMFFLIEKINAFNHDITSLTEGEEFVGEDECRLFTKIRNEFHKWSLVIEKRFQRGYKAICKQIERFENRYRGRELPGFVNYKTFEIIIKQQIKELEEPAVYMLHTITDMVQAAFTDISEANFAEFFNLYRTTKSKIEDIKFELEKEAEKSIRLHFQMEQIVYCQDQVYQCALQRVREESDKGKDRKINSMCSKEVSSVNISLSDIFEHLLAYRQEATNRISSHIPLIIQYFILQVYGQKLQKDMLLLLHDKDTHNWLLKERSDTSDKRKLLKERLARLAQARRRLAKFPG.

Residue Met1 is modified to N-acetylmethionine. Residues 1–20 form a disordered region; sequence MVNSKGKITDSDPGSSHLLL. A Dynamin-type G domain is found at 65–338; it reads DLALPAIAVI…LITHICKTLP (274 aa). The tract at residues 75–82 is G1 motif; it reads GDQSSGKS. 75–82 is a binding site for GTP; the sequence is GDQSSGKS. The tract at residues 100-102 is G2 motif; the sequence is VTR. Positions 176–179 are G3 motif; it reads DLPG. Residues 176-180 and 245-248 each bind GTP; these read DLPGI and TKPD. The tract at residues 245-248 is G4 motif; sequence TKPD. The tract at residues 277 to 280 is G5 motif; the sequence is KCRG. The bundle signaling element (BSE) stretch occupies residues 339–364; it reads LLENQIKENYEKITEELQKYGSDVPE. Positions 364-531 are middle domain; the sequence is EEEHEKMFFL…HFQMEQIVYC (168 aa). The segment at 365–628 is stalk; it reads EEHEKMFFLI…KDTHNWLLKE (264 aa). Residues 551–554 are critical for lipid-binding; the sequence is KDRK. Residues 570–658 form the GED domain; that stretch reads LSDIFEHLLA…ARRRLAKFPG (89 aa).

The protein belongs to the TRAFAC class dynamin-like GTPase superfamily. Dynamin/Fzo/YdjA family. As to quaternary structure, homooligomer. Oligomerizes into multimeric filamentous or ring-like structures by virtue of its stalk domain. Oligomerization is critical for GTPase activity, protein stability, and recognition of viral target structures. Interacts with TRPC1, TRPC3, TRPC4, TRPC5, TRPC6 and TRPC7. Interacts with HSPA5. Interacts with TUBB/TUBB5. Interacts with DDX39A and DDX39B. Post-translationally, ISGylated.

It localises to the cytoplasm. Its subcellular location is the endoplasmic reticulum membrane. The protein localises to the perinuclear region. In terms of biological role, interferon-induced dynamin-like GTPase with antiviral activity. This is Interferon-induced GTP-binding protein Mx1 (MX1) from Eumetopias jubatus (Steller sea lion).